The following is a 379-amino-acid chain: MSATLALTEQLIARASVTPDDQHCQQIMTERLTALGFECETIASHGVTNLWAVKRGTDGRDGKLLAFAGHTDVVPTGPLEQWSSPPFIPAHRDGKLYGRGAADMKTSLAAFVVASEEFVAAHPGHRGTIAFLITSDEEGPATDGTVKVVELLEARGERMDYCIVGEPTSTTELGDVVKNGRRGSMSGELVVKGVQGHIAYPHLAKNPIHLLAPALAELAAEQWDEGNEYFPPTTWQVSNLHAGTGASNVIPGHADLLFNFRFSTASTVEGLQARVHAILDKHGLEYTLKWSVSGLPFLTPRGELSGALENAIRTETGITTELSTTGGTSDGRFIARICPQVIEFGPPNGSIHKIDEHIEVRFVDPLKNVYRRVLEQLIA.

Zn(2+) is bound at residue histidine 70. Residue aspartate 72 is part of the active site. Zn(2+) is bound at residue aspartate 103. Glutamate 137 (proton acceptor) is an active-site residue. Glutamate 138, glutamate 166, and histidine 352 together coordinate Zn(2+).

The protein belongs to the peptidase M20A family. DapE subfamily. Homodimer. Requires Zn(2+) as cofactor. It depends on Co(2+) as a cofactor.

The enzyme catalyses N-succinyl-(2S,6S)-2,6-diaminopimelate + H2O = (2S,6S)-2,6-diaminopimelate + succinate. Its pathway is amino-acid biosynthesis; L-lysine biosynthesis via DAP pathway; LL-2,6-diaminopimelate from (S)-tetrahydrodipicolinate (succinylase route): step 3/3. In terms of biological role, catalyzes the hydrolysis of N-succinyl-L,L-diaminopimelic acid (SDAP), forming succinate and LL-2,6-diaminopimelate (DAP), an intermediate involved in the bacterial biosynthesis of lysine and meso-diaminopimelic acid, an essential component of bacterial cell walls. This Burkholderia lata (strain ATCC 17760 / DSM 23089 / LMG 22485 / NCIMB 9086 / R18194 / 383) protein is Succinyl-diaminopimelate desuccinylase.